Here is a 296-residue protein sequence, read N- to C-terminus: Glycine--tRNA ligase alpha subunit (296 aa).

It belongs to the class-II aminoacyl-tRNA synthetase family. In terms of assembly, tetramer of two alpha and two beta subunits.

It is found in the cytoplasm. The enzyme catalyses tRNA(Gly) + glycine + ATP = glycyl-tRNA(Gly) + AMP + diphosphate. In Listeria monocytogenes serotype 4a (strain HCC23), this protein is Glycine--tRNA ligase alpha subunit.